Here is a 523-residue protein sequence, read N- to C-terminus: Calcium uptake protein 3, mitochondrial (523 aa).

Residues 1 to 6 (MAALRR) constitute a mitochondrion transit peptide. The 36-residue stretch at 226-261 (PHAGFRIAFNMFDTDGNEMVDKKEFLVLQEIFRKKN) folds into the EF-hand 1 domain. Residues Asp-238, Asp-240, Asn-242, Met-244, Asp-246, and Glu-249 each coordinate Ca(2+). One can recognise an EF-hand 2; degenerate domain in the interval 395–430 (ENTSVFLENVRYSISEEKGITFDEFRSFFQFLNNLE). The 36-residue stretch at 464–499 (SPHLVNTVFKIFDVDKDDQLSYKEFIGIMKDRLHRG) folds into the EF-hand 3 domain. Residues Asp-476, Asp-478, Asp-480, Gln-482, and Glu-487 each coordinate Ca(2+).

Belongs to the MICU1 family. MICU3 subfamily. As to quaternary structure, heterodimer; disulfide-linked; heterodimerizes with MICU1. Heterodimerizes with isoform 3 of MICU1 (MICU1.1) in skeletal muscle. Component of the uniplex complex, composed of MCU, EMRE/SMDT1, MICU1 and MICU3 in a 4:4:1:1 stoichiometry. As to expression, predominantly expressed in skeletal muscle and central nervous system.

It localises to the mitochondrion intermembrane space. The protein localises to the mitochondrion inner membrane. Functionally, tissue-specific calcium sensor of the mitochondrial calcium uniporter (MCU) channel, which specifically regulates MCU channel activity in the central nervous system and skeletal muscle. Senses calcium level via its EF-hand domains: compared to MICU1 and MICU2, MICU3 has a higher affinity for calcium. MICU1 and MICU3 form a disulfide-linked heterodimer that stimulates and inhibits MCU activity, depending on the concentration of calcium. At low calcium levels, MICU1 occludes the pore of the MCU channel, preventing mitochondrial calcium uptake. At higher calcium levels, calcium-binding to MICU1 and MICU3 induces a conformational change that weakens MCU-MICU1 interactions and moves the MICU1-MICU3 heterodimer away from the pore, allowing calcium permeation through the MCU channel. The high calcium affinity of MICU3 lowers the calcium threshold necessary for calcium permeation through the MCU channel. The MICU1-MICU3 heterodimer promotes flexibility of neurotransmission in neuronal cells by enhancing mitochondrial calcium uptake in presynapses. It is also required to increase mitochondrial calcium uptake in skeletal muscle cells, thereby increasing ATP production. This is Calcium uptake protein 3, mitochondrial from Mus musculus (Mouse).